The primary structure comprises 283 residues: Pantothenate synthetase (283 aa).

An ATP-binding site is contributed by 30–37 (MGYLHEGH). Histidine 37 serves as the catalytic Proton donor. Position 61 (glutamine 61) interacts with (R)-pantoate. Glutamine 61 lines the beta-alanine pocket. Residue 147–150 (GQKD) coordinates ATP. Glutamine 153 serves as a coordination point for (R)-pantoate. Residues valine 176 and 184 to 187 (LSSR) each bind ATP.

It belongs to the pantothenate synthetase family. As to quaternary structure, homodimer.

Its subcellular location is the cytoplasm. The catalysed reaction is (R)-pantoate + beta-alanine + ATP = (R)-pantothenate + AMP + diphosphate + H(+). Its pathway is cofactor biosynthesis; (R)-pantothenate biosynthesis; (R)-pantothenate from (R)-pantoate and beta-alanine: step 1/1. Functionally, catalyzes the condensation of pantoate with beta-alanine in an ATP-dependent reaction via a pantoyl-adenylate intermediate. This Moorella thermoacetica (strain ATCC 39073 / JCM 9320) protein is Pantothenate synthetase.